A 443-amino-acid polypeptide reads, in one-letter code: Endothelin receptor type B (443 aa).

A signal peptide spans 1 to 26 (MQPLRSLCGRALVALIFACGVAGVQS). Residues 27–102 (EERGFPPAGA…GPIEIKDTFK (76 aa)) are Extracellular-facing. The interval 53-89 (TFWPRGSNASLPRSSSPPQMPKGGRMAGPPARTLTPP) is disordered. The span at 59–69 (SNASLPRSSSP) shows a compositional bias: polar residues. An N-linked (GlcNAc...) asparagine glycan is attached at N60. Residues 103 to 127 (YINTVVSCLVFVLGIIGNSTLLRII) form a helical membrane-spanning segment. The Cytoplasmic segment spans residues 128–138 (YKNKCMRNGPN). A helical membrane pass occupies residues 139–164 (ILIASLALGDLLHIIIDIPINVYKLL). Residues 165 to 176 (AEDWPFGVEMCK) are Extracellular-facing. C175 and C256 are joined by a disulfide. A helical transmembrane segment spans residues 177–198 (LVPFIQKASVGITVLSLCALSI). The Cytoplasmic portion of the chain corresponds to 199 to 219 (DRYRAVASWSRIKGIGVPKWT). A helical membrane pass occupies residues 220 to 244 (AVEIVLIWVVSVVLAVPEALGFDMI). The Extracellular portion of the chain corresponds to 245–272 (TTDYKGNRLRICLLHPTQKTAFMQFYKT). A helical membrane pass occupies residues 273–297 (AKDWWLFSFYFCLPLAITAFFYTLM). Over 298 to 325 (TCEMLRKKSGMQIALNDHLKQRREVAKT) the chain is Cytoplasmic. Residue S306 is modified to Phosphoserine. A helical transmembrane segment spans residues 326–351 (VFCLVLVFALCWLPLHLSRILKLTLY). Topologically, residues 352–363 (DQNDSNRCELLS) are extracellular. An N-linked (GlcNAc...) asparagine glycan is attached at N354. Residues 364 to 390 (FLLVLDYIGINMASLNSCINPIALYLV) traverse the membrane as a helical segment. The Cytoplasmic segment spans residues 391 to 443 (SKRFKNCFKSCLCCWCQSFEEKQSLEEKQSCLKFKANDHGYDNFRSSNKYSSS). 3 S-palmitoyl cysteine lipidation sites follow: C403, C404, and C406. S420 is subject to Phosphoserine. Y440 is subject to Phosphotyrosine. Phosphoserine occurs at positions 441, 442, and 443.

It belongs to the G-protein coupled receptor 1 family. Endothelin receptor subfamily. EDNRB sub-subfamily.

It is found in the cell membrane. Non-specific receptor for endothelin 1, 2, and 3. Mediates its action by association with G proteins that activate a phosphatidylinositol-calcium second messenger system. The protein is Endothelin receptor type B (EDNRB) of Sus scrofa (Pig).